The primary structure comprises 399 residues: Glutathione S-transferase LANCL1 (399 aa).

An N-acetylalanine modification is found at Ala-2. Lys-142 is subject to N6-acetyllysine. Cys-276 is a binding site for Zn(2+). Lys-317 provides a ligand contact to glutathione. Cys-322 and His-323 together coordinate Zn(2+). 364-367 (RTPD) provides a ligand contact to glutathione.

This sequence belongs to the LanC-like protein family. Interacts with the C-terminal of STOM. Interacts with the EPS8 SH3 domain. Interaction with EPS8 is inhibited by glutathione binding. In terms of assembly, (Microbial infection) Interacts with P.falciparum SBP1. As to expression, detected in erythrocytes, brain, kidney, testis, ovary, heart, lung, placenta and spleen (at protein level). Ubiquitous. Strongly expressed in brain, spinal cord, pituitary gland, kidney, heart, skeletal muscle, pancreas, ovary and testis.

It localises to the cytoplasm. Its subcellular location is the cell membrane. It carries out the reaction RX + glutathione = an S-substituted glutathione + a halide anion + H(+). It catalyses the reaction 1-chloro-2,4-dinitrobenzene + glutathione = 2,4-dinitrophenyl-S-glutathione + chloride + H(+). Functions as a glutathione transferase. Catalyzes conjugation of the glutathione (GSH) to artificial substrates 1-chloro-2,4-dinitrobenzene (CDNB) and p-nitrophenyl acetate. Mitigates neuronal oxidative stress during normal postnatal development and in response to oxidative stresses probably through GSH antioxidant defense mechanism. May play a role in EPS8 signaling. Binds glutathione. The protein is Glutathione S-transferase LANCL1 of Homo sapiens (Human).